A 335-amino-acid polypeptide reads, in one-letter code: Casein kinase I (335 aa).

Positions 9-278 (YRLGRKIGSG…LRRLFKDLFF (270 aa)) constitute a Protein kinase domain. ATP-binding positions include 15–23 (IGSGSFGDI) and lysine 38. Residue aspartate 128 is the Proton acceptor of the active site. A disordered region spans residues 304-335 (RSMVNQGAESGNQWRRDASGRDPLGRLPQLEP). The span at 305 to 316 (SMVNQGAESGNQ) shows a compositional bias: polar residues. The segment covering 317-327 (WRRDASGRDPL) has biased composition (basic and acidic residues).

The protein belongs to the protein kinase superfamily. CK1 Ser/Thr protein kinase family. Casein kinase I subfamily.

It catalyses the reaction L-seryl-[protein] + ATP = O-phospho-L-seryl-[protein] + ADP + H(+). The catalysed reaction is L-threonyl-[protein] + ATP = O-phospho-L-threonyl-[protein] + ADP + H(+). Casein kinases are operationally defined by their preferential utilization of acidic proteins such as caseins as substrates. It can phosphorylate a large number of proteins. The protein is Casein kinase I of Eimeria tenella (Coccidian parasite).